Consider the following 108-residue polypeptide: MLKTTLLFFATALCEIVGCYLPWLWLKRGATPLLLIPTALALALFVWLLTLHPAASGRVYAAYGGVYVCTALLWLRVVDGVKLTHYDWAGAAIALCGMLIIVAGWGRA.

4 helical membrane passes run 6 to 26, 29 to 49, 61 to 81, and 86 to 106; these read LLFFATALCEIVGCYLPWLWL, GATPLLLIPTALALALFVWLL, AAYGGVYVCTALLWLRVVDGV, and YDWAGAAIALCGMLIIVAGWG.

Belongs to the UPF0060 family.

Its subcellular location is the cell inner membrane. The protein is UPF0060 membrane protein KPN78578_15550 of Klebsiella pneumoniae subsp. pneumoniae (strain ATCC 700721 / MGH 78578).